Reading from the N-terminus, the 378-residue chain is Leukosialin (378 aa).

Positions 1–7 (WAQVVSQ) are cleaved as a signal peptide. Residues 8-231 (ENLPNTMTML…TVPPRPGSSG (224 aa)) are Extracellular-facing. Residues threonine 13, threonine 15, and threonine 20 are each glycosylated (O-linked (GalNAc...) threonine). Residues 13–33 (TMTMLPFTPNSESPSTSEALS) form a disordered region. Serine 23, serine 25, and serine 27 each carry an O-linked (GalNAc...) serine glycan. Threonine 28 is a glycosylation site (O-linked (GalNAc...) threonine). O-linked (GalNAc...) serine glycosylation is found at serine 29 and serine 33. The O-linked (GalNAc...) threonine glycan is linked to threonine 34. O-linked (GalNAc...) serine glycans are attached at residues serine 36 and serine 37. Residue threonine 40 is glycosylated (O-linked (GalNAc...) threonine). Residues serine 108 and serine 113 are each glycosylated (O-linked (GalNAc...) serine). O-linked (GalNAc...) threonine glycans are attached at residues threonine 118, threonine 120, and threonine 124. O-linked (GalNAc...) serine glycans are attached at residues serine 125 and serine 126. Threonine 174 carries an O-linked (GalNAc...) threonine glycan. Serine 176 and serine 180 each carry an O-linked (GalNAc...) serine glycan. Threonine 183 carries O-linked (GalNAc...) threonine glycosylation. Residue serine 187 is glycosylated (O-linked (GalNAc...) serine). A glycan (O-linked (GalNAc...) threonine) is linked at threonine 189. A helical membrane pass occupies residues 232-254 (MLLVSMLIALTVVLVLVALLLLW). The tract at residues 255 to 285 (RQRQKRRTGALTLSRGGKRNGTVDAWAGPAR) is required for interaction with EZR, MSN and RDX and for co-localization to microvilli. Residues 255–378 (RQRQKRRTGA…AKDGAAPQSL (124 aa)) are Cytoplasmic-facing. The Nuclear localization signal motif lies at 259–273 (KRRTGALTLSRGGKR). The segment at 265–378 (LTLSRGGKRN…AKDGAAPQSL (114 aa)) is disordered. A Phosphoserine modification is found at serine 268. Threonine 276 is modified (phosphothreonine). Positions 310-321 (GSGQRPTLTTFF) are enriched in polar residues. Serine 311 is subject to Phosphoserine. A Phosphothreonine modification is found at threonine 316. Phosphoserine occurs at positions 322 and 326. Position 330 is a phosphoserine; by PKC/PRKCQ (serine 330). Position 354 is a phosphoserine (serine 354). Threonine 361 carries the phosphothreonine modification.

In terms of assembly, interacts with SIGLEC1. As to quaternary structure, monomer. Interacts with CTNNB1. Interacts with EZR, MSN and RDX (via FERM domain). Has a high content of sialic acid and O-linked carbohydrate structures. Post-translationally, phosphorylation at Ser-330 is regulated by chemokines, requires its association with ERM proteins (EZR, RDX and MSN) and is essential for its function in the regulation of T-cell trafficking to lymph nodes. In terms of processing, cleavage by CTSG releases its extracellular domain and triggers its intramembrane proteolysis by gamma-secretase releasing the CD43 cytoplasmic tail chain (CD43-ct) which translocates to the nucleus. Sumoylated. In terms of tissue distribution, cell surface of thymocytes, T-lymphocytes, neutrophils, plasma cells and myelomas.

The protein resides in the membrane. It is found in the cell projection. The protein localises to the microvillus. Its subcellular location is the uropodium. It localises to the nucleus. The protein resides in the PML body. In terms of biological role, predominant cell surface sialoprotein of leukocytes which regulates multiple T-cell functions, including T-cell activation, proliferation, differentiation, trafficking and migration. Positively regulates T-cell trafficking to lymph-nodes via its association with ERM proteins (EZR, RDX and MSN). Negatively regulates Th2 cell differentiation and predisposes the differentiation of T-cells towards a Th1 lineage commitment. Promotes the expression of IFN-gamma by T-cells during T-cell receptor (TCR) activation of naive cells and induces the expression of IFN-gamma by CD4(+) T-cells and to a lesser extent by CD8(+) T-cells. Plays a role in preparing T-cells for cytokine sensing and differentiation into effector cells by inducing the expression of cytokine receptors IFNGR and IL4R, promoting IFNGR and IL4R signaling and by mediating the clustering of IFNGR with TCR. Acts as a major E-selectin ligand responsible for Th17 cell rolling on activated vasculature and recruitment during inflammation. Mediates Th17 cells, but not Th1 cells, adhesion to E-selectin. Acts as a T-cell counter-receptor for SIGLEC1. Its function is as follows. Protects cells from apoptotic signals, promoting cell survival. The chain is Leukosialin (Spn) from Rattus norvegicus (Rat).